The chain runs to 325 residues: Probable tRNA pseudouridine synthase B (325 aa).

The active-site Nucleophile is Asp71. In terms of domain architecture, PUA spans 238–313; it reads LPKIYVKDSA…VAASIERVIM (76 aa).

This sequence belongs to the pseudouridine synthase TruB family. Type 2 subfamily.

The enzyme catalyses uridine(55) in tRNA = pseudouridine(55) in tRNA. Functionally, could be responsible for synthesis of pseudouridine from uracil-55 in the psi GC loop of transfer RNAs. The polypeptide is Probable tRNA pseudouridine synthase B (Korarchaeum cryptofilum (strain OPF8)).